A 490-amino-acid polypeptide reads, in one-letter code: Sushi domain-containing protein 4 (490 aa).

The segment at 1–20 (MYHGMNPSNGDGFLEQQLQQ) is disordered. The signal sequence occupies residues 1 to 41 (MYHGMNPSNGDGFLEQQLQQQQPQSPQRLLAVILWFQLALC). Residues 42-319 (FGPAQLTGGF…PSTHETLLTT (278 aa)) are Extracellular-facing. Sushi domains follow at residues 55 to 119 (NVCA…VCIQ), 120 to 179 (EDCR…ICQG), 178 to 239 (QGCL…RCLA), and 241 to 304 (EVCP…YCIK). Intrachain disulfides connect cysteine 57-cysteine 99, cysteine 85-cysteine 117, cysteine 122-cysteine 165, cysteine 147-cysteine 177, cysteine 180-cysteine 224, cysteine 210-cysteine 237, cysteine 243-cysteine 289, and cysteine 274-cysteine 302. Residues asparagine 104 and asparagine 134 are each glycosylated (N-linked (GlcNAc...) asparagine). Asparagine 192 carries N-linked (GlcNAc...) asparagine glycosylation. A helical membrane pass occupies residues 320 to 340 (WKIVAFTATSVLLVLLLVILA). Over 341–490 (RMFQTKFKAH…DEIPLMEEDP (150 aa)) the chain is Cytoplasmic. Residues 394 to 490 (YPASVGQGCP…DEIPLMEEDP (97 aa)) are disordered. Polar residues-rich tracts occupy residues 430-444 (CDST…QSLY) and 461-475 (DTIS…STSP). Residues 479–490 (IADEIPLMEEDP) are compositionally biased toward acidic residues.

In terms of tissue distribution, high expression in brain and eye, with weaker expression in spinal cord and testis. Detected in white matter of brain and in the outer segments of photoreceptors.

The protein localises to the membrane. Its function is as follows. Acts as a complement inhibitor by disrupting the formation of the classical C3 convertase. Isoform 3 inhibits the classical complement pathway, while membrane-bound isoform 1 inhibits deposition of C3b via both the classical and alternative complement pathways. The sequence is that of Sushi domain-containing protein 4 (Susd4) from Mus musculus (Mouse).